A 442-amino-acid polypeptide reads, in one-letter code: Serine--tRNA ligase (442 aa).

244–246 (TAE) serves as a coordination point for L-serine. 275–277 (RAE) serves as a coordination point for ATP. E298 serves as a coordination point for L-serine. ATP is bound at residue 365–368 (EISS). S400 is an L-serine binding site.

This sequence belongs to the class-II aminoacyl-tRNA synthetase family. Type-1 seryl-tRNA synthetase subfamily. In terms of assembly, homodimer. The tRNA molecule binds across the dimer.

The protein localises to the cytoplasm. It catalyses the reaction tRNA(Ser) + L-serine + ATP = L-seryl-tRNA(Ser) + AMP + diphosphate + H(+). The catalysed reaction is tRNA(Sec) + L-serine + ATP = L-seryl-tRNA(Sec) + AMP + diphosphate + H(+). It participates in aminoacyl-tRNA biosynthesis; selenocysteinyl-tRNA(Sec) biosynthesis; L-seryl-tRNA(Sec) from L-serine and tRNA(Sec): step 1/1. Functionally, catalyzes the attachment of serine to tRNA(Ser). Is also able to aminoacylate tRNA(Sec) with serine, to form the misacylated tRNA L-seryl-tRNA(Sec), which will be further converted into selenocysteinyl-tRNA(Sec). This Bradyrhizobium sp. (strain ORS 278) protein is Serine--tRNA ligase.